The chain runs to 45 residues: Large ribosomal subunit protein bL34 (45 aa).

The disordered stretch occupies residues 1–45; it reads MTKRTFGGTSRKRKRVSGFRVRMRSHTGRRVIKSRRQKGRERIAV. The segment covering 10–39 has biased composition (basic residues); the sequence is SRKRKRVSGFRVRMRSHTGRRVIKSRRQKG.

The protein belongs to the bacterial ribosomal protein bL34 family.

This Prochlorococcus marinus (strain MIT 9301) protein is Large ribosomal subunit protein bL34.